The chain runs to 307 residues: Protein TIPIN homolog (307 aa).

2 disordered regions span residues 1–50 (MASL…SQDA) and 252–279 (ASMD…LSNE). Over residues 262-271 (PLPPSQPPTP) the composition is skewed to pro residues.

This sequence belongs to the CSM3 family.

Its subcellular location is the cytoplasm. It is found in the nucleus. In terms of biological role, required for normal progression of S-phase. Important for cell survival after DNA damage or replication stress. The protein is Protein TIPIN homolog of Drosophila melanogaster (Fruit fly).